The following is a 414-amino-acid chain: Esterase FrsA (414 aa).

It belongs to the FrsA family.

The catalysed reaction is a carboxylic ester + H2O = an alcohol + a carboxylate + H(+). Functionally, catalyzes the hydrolysis of esters. The sequence is that of Esterase FrsA from Escherichia coli O127:H6 (strain E2348/69 / EPEC).